A 415-amino-acid polypeptide reads, in one-letter code: Transcription termination factor Rho (415 aa).

Residues 52–119 (ADIASGVLDI…TDVVRVNGRT (68 aa)) enclose the Rho RNA-BD domain. Residues 161–166 (GKGQRG), 173–178 (KTGKTV), and Arg-204 each bind ATP.

This sequence belongs to the Rho family. In terms of assembly, homohexamer. The homohexamer assembles into an open ring structure.

Functionally, facilitates transcription termination by a mechanism that involves Rho binding to the nascent RNA, activation of Rho's RNA-dependent ATPase activity, and release of the mRNA from the DNA template. The sequence is that of Transcription termination factor Rho from Streptomyces coelicolor (strain ATCC BAA-471 / A3(2) / M145).